Here is a 449-residue protein sequence, read N- to C-terminus: UDP-N-acetylmuramoylalanine--D-glutamate ligase (449 aa).

118 to 124 (GSNGKTT) contributes to the ATP binding site.

This sequence belongs to the MurCDEF family.

The protein resides in the cytoplasm. The catalysed reaction is UDP-N-acetyl-alpha-D-muramoyl-L-alanine + D-glutamate + ATP = UDP-N-acetyl-alpha-D-muramoyl-L-alanyl-D-glutamate + ADP + phosphate + H(+). Its pathway is cell wall biogenesis; peptidoglycan biosynthesis. Functionally, cell wall formation. Catalyzes the addition of glutamate to the nucleotide precursor UDP-N-acetylmuramoyl-L-alanine (UMA). This chain is UDP-N-acetylmuramoylalanine--D-glutamate ligase, found in Leuconostoc citreum (strain KM20).